The primary structure comprises 172 residues: MINKHNSVLHNQFWQSYNHRGFMVTKLSDLMSYVSSWARSNSLWPMTFGLACCAVEMMHTAASKYDLDRYGIMFRASPRQADVMIVAGTLTNKMAPALRKVYDQMTEPRYVISMGSCANGGGYYHYSYSVVRGCDRIVPVDIYVPGCPPTAEALLYGILCLQQKINRTATST.

[4Fe-4S] cluster-binding residues include Cys52, Cys53, Cys117, and Cys147.

This sequence belongs to the complex I 20 kDa subunit family. NDH-1 is composed of 14 different subunits. Subunits NuoB, C, D, E, F, and G constitute the peripheral sector of the complex. [4Fe-4S] cluster is required as a cofactor.

It is found in the cell inner membrane. It carries out the reaction a quinone + NADH + 5 H(+)(in) = a quinol + NAD(+) + 4 H(+)(out). Functionally, NDH-1 shuttles electrons from NADH, via FMN and iron-sulfur (Fe-S) centers, to quinones in the respiratory chain. Couples the redox reaction to proton translocation (for every two electrons transferred, four hydrogen ions are translocated across the cytoplasmic membrane), and thus conserves the redox energy in a proton gradient. This is NADH-quinone oxidoreductase subunit B from Ehrlichia ruminantium (strain Gardel).